Reading from the N-terminus, the 411-residue chain is 2,3-bisphosphoglycerate-independent phosphoglycerate mutase (411 aa).

It belongs to the BPG-independent phosphoglycerate mutase family. A-PGAM subfamily.

It carries out the reaction (2R)-2-phosphoglycerate = (2R)-3-phosphoglycerate. It participates in carbohydrate degradation; glycolysis; pyruvate from D-glyceraldehyde 3-phosphate: step 3/5. In terms of biological role, catalyzes the interconversion of 2-phosphoglycerate and 3-phosphoglycerate. This Pyrobaculum arsenaticum (strain DSM 13514 / JCM 11321 / PZ6) protein is 2,3-bisphosphoglycerate-independent phosphoglycerate mutase.